The following is a 209-amino-acid chain: GTP-binding nuclear protein Ran1A (209 aa).

Residues 1–162 (NFKLVIVGDG…LYLARKLAGD (162 aa)) enclose the Small GTPase Ran-type domain. 9–16 (DGGTGKTT) lines the GTP pocket. The tract at residues 28–36 (KKYEPTIGV) is switch-I. GTP-binding positions include glycine 59, 113-116 (NKVD), and 141-143 (SAK). Positions 59–75 (GQEKFGGLRDGYYIHGQ) are switch-II. Residues 187–196 (QHEAELAQAA) show a composition bias toward low complexity. The disordered stretch occupies residues 187 to 209 (QHEAELAQAASQPLPDDDDDAFD).

It belongs to the small GTPase superfamily. Ran family. As to quaternary structure, found in a nuclear export complex with RanGTP, exportin and pre-miRNA.

The protein resides in the nucleus. In terms of biological role, GTP-binding protein involved in nucleocytoplasmic transport. Required for the import of protein into the nucleus and also for RNA export. Involved in chromatin condensation and control of cell cycle. This is GTP-binding nuclear protein Ran1A (RAN1A) from Lotus japonicus (Lotus corniculatus var. japonicus).